Consider the following 1117-residue polypeptide: Mitochondrial protein cyt-4 (1117 aa).

One can recognise an RNB domain in the interval 561-916 (RQDFYTSTVY…LVHWQIQAAL (356 aa)). The interval 705-730 (VVLEVGTPPSAEDEAPTRKMTKPDEL) is disordered. The segment covering 719–730 (APTRKMTKPDEL) has biased composition (basic and acidic residues).

It belongs to the RNR ribonuclease family. In terms of assembly, homodimer.

The protein resides in the mitochondrion. In terms of biological role, required for RNA 5'- and 3'-end processing and splicing. May act on the RNA processing enzymes directly, or it may act on other regulatory molecules, which influence the activity or synthesis of these enzymes. The chain is Mitochondrial protein cyt-4 (cyt-4) from Neurospora crassa (strain ATCC 24698 / 74-OR23-1A / CBS 708.71 / DSM 1257 / FGSC 987).